The chain runs to 333 residues: Fructose-1,6-bisphosphatase class 1 (333 aa).

Residues Glu-92, Asp-113, Leu-115, and Asp-116 each contribute to the Mg(2+) site. Residues 116–119, Asn-209, Tyr-242, and Lys-272 contribute to the substrate site; that span reads DGSS. Glu-278 contacts Mg(2+).

It belongs to the FBPase class 1 family. As to quaternary structure, homotetramer. It depends on Mg(2+) as a cofactor.

The protein localises to the cytoplasm. It catalyses the reaction beta-D-fructose 1,6-bisphosphate + H2O = beta-D-fructose 6-phosphate + phosphate. It functions in the pathway carbohydrate biosynthesis; Calvin cycle. This is Fructose-1,6-bisphosphatase class 1 from Chlorobium phaeovibrioides (strain DSM 265 / 1930) (Prosthecochloris vibrioformis (strain DSM 265)).